The following is a 349-amino-acid chain: Signal peptidase I (349 aa).

The next 2 membrane-spanning stretches (helical) occupy residues 3–23 (NLFF…LDYF) and 25–45 (LPNT…VLWC). At 46–80 (YHRFVVLPKRHRQVARAEQRSGKTLSEEEKAKIEP) the chain is on the cytoplasmic side. Residues 81-101 (ISEASEFLSSLFPVLAVVFLV) traverse the membrane as a helical segment. At 102 to 349 (RSFLFEPFQI…RFERFFTAIK (248 aa)) the chain is on the periplasmic side. Catalysis depends on residues S115 and K196.

It belongs to the peptidase S26 family.

The protein localises to the cell inner membrane. The enzyme catalyses Cleavage of hydrophobic, N-terminal signal or leader sequences from secreted and periplasmic proteins.. The sequence is that of Signal peptidase I (lepB) from Haemophilus influenzae (strain ATCC 51907 / DSM 11121 / KW20 / Rd).